Reading from the N-terminus, the 371-residue chain is Phospholipid-transporting ATPase accessory subunit ivn1 (371 aa).

Over 1–39 the chain is Cytoplasmic; it reads MSQTEIVKKPKHKRFKRPDKSRFVQQTLPAWQFIFTPWT. Residues 40–60 traverse the membrane as a helical segment; that stretch reads VLPLLFLLGIVFAPLGAGMFV. At 61-325 the chain is on the extracellular side; the sequence is ASRRVKELRI…STTSVIGGKN (265 aa). 2 cysteine pairs are disulfide-bonded: C75/C111 and C166/C181. An N-linked (GlcNAc...) asparagine glycan is attached at N99. N-linked (GlcNAc...) asparagine glycans are attached at residues N190, N212, N216, N233, N284, and N297. Residues 326-346 traverse the membrane as a helical segment; sequence YFLGILYFVIGGLCAASGVIL. The Cytoplasmic portion of the chain corresponds to 347–371; the sequence is SIACLIKPRRVGDPRYLSWNRGKSS.

This sequence belongs to the CDC50/LEM3 family.

Its subcellular location is the endoplasmic reticulum membrane. Its function is as follows. Accessory component of a P4-ATPase flippase complex which catalyzes the hydrolysis of ATP coupled to the transport of aminophospholipids from the lumenal to the cytosolic leaflet of membranes and ensures the maintenance of asymmetric distribution of phospholipids. In Schizosaccharomyces pombe (strain 972 / ATCC 24843) (Fission yeast), this protein is Phospholipid-transporting ATPase accessory subunit ivn1 (ivn1).